Consider the following 243-residue polypeptide: Protein GID8 homolog (243 aa).

A LisH domain is found at 40 to 72 (RKEDMNTLVMNFLVTEGYVEAAEKFQRESGTKP). A CTLH domain is found at 78-135 (TITDRMAVKKAVQNGNVEDAIEKVNDLNPEILDTNPELFFHLQQQRLIELIRQGKTEE).

The protein belongs to the GID8 family. As to quaternary structure, interacts with RANBPM.

Its subcellular location is the cytoplasm. The chain is Protein GID8 homolog from Arabidopsis thaliana (Mouse-ear cress).